The sequence spans 873 residues: DNA mismatch repair protein MutS (873 aa).

620-627 (GPNMAGKS) provides a ligand contact to ATP.

The protein belongs to the DNA mismatch repair MutS family.

Functionally, this protein is involved in the repair of mismatches in DNA. It is possible that it carries out the mismatch recognition step. This protein has a weak ATPase activity. This is DNA mismatch repair protein MutS from Ruminiclostridium cellulolyticum (strain ATCC 35319 / DSM 5812 / JCM 6584 / H10) (Clostridium cellulolyticum).